Here is a 252-residue protein sequence, read N- to C-terminus: 4-hydroxy-tetrahydrodipicolinate reductase (252 aa).

NAD(+) contacts are provided by residues 8-13, 85-87, and 109-112; these read GCSGKM, CTT, and SANM. The Proton donor/acceptor role is filled by histidine 142. Histidine 143 is a (S)-2,3,4,5-tetrahydrodipicolinate binding site. The active-site Proton donor is the lysine 146. A (S)-2,3,4,5-tetrahydrodipicolinate-binding site is contributed by 152–153; it reads GT.

Belongs to the DapB family.

Its subcellular location is the cytoplasm. The catalysed reaction is (S)-2,3,4,5-tetrahydrodipicolinate + NAD(+) + H2O = (2S,4S)-4-hydroxy-2,3,4,5-tetrahydrodipicolinate + NADH + H(+). It catalyses the reaction (S)-2,3,4,5-tetrahydrodipicolinate + NADP(+) + H2O = (2S,4S)-4-hydroxy-2,3,4,5-tetrahydrodipicolinate + NADPH + H(+). Its pathway is amino-acid biosynthesis; L-lysine biosynthesis via DAP pathway; (S)-tetrahydrodipicolinate from L-aspartate: step 4/4. Its function is as follows. Catalyzes the conversion of 4-hydroxy-tetrahydrodipicolinate (HTPA) to tetrahydrodipicolinate. This Clostridium novyi (strain NT) protein is 4-hydroxy-tetrahydrodipicolinate reductase.